The primary structure comprises 295 residues: Methionine aminopeptidase (295 aa).

A substrate-binding site is contributed by histidine 62. Residues aspartate 82, aspartate 93, and histidine 153 each contribute to the a divalent metal cation site. Residue histidine 161 coordinates substrate. 2 residues coordinate a divalent metal cation: glutamate 187 and glutamate 280.

This sequence belongs to the peptidase M24A family. Methionine aminopeptidase archaeal type 2 subfamily. Monomer. Co(2+) is required as a cofactor. It depends on Zn(2+) as a cofactor. The cofactor is Mn(2+). Fe(2+) serves as cofactor.

The enzyme catalyses Release of N-terminal amino acids, preferentially methionine, from peptides and arylamides.. In terms of biological role, removes the N-terminal methionine from nascent proteins. The N-terminal methionine is often cleaved when the second residue in the primary sequence is small and uncharged (Met-Ala-, Cys, Gly, Pro, Ser, Thr, or Val). This chain is Methionine aminopeptidase, found in Pyrococcus horikoshii (strain ATCC 700860 / DSM 12428 / JCM 9974 / NBRC 100139 / OT-3).